We begin with the raw amino-acid sequence, 626 residues long: Beta-galactosidase large subunit (626 aa).

Glu-466 acts as the Proton donor in catalysis. The active-site Nucleophile is Glu-534.

It belongs to the glycosyl hydrolase 2 family. As to quaternary structure, heterodimer of a large (LacL) and a small subunit (LacM).

It carries out the reaction Hydrolysis of terminal non-reducing beta-D-galactose residues in beta-D-galactosides.. In terms of biological role, component of a beta-galactosidase that displays activity with the artificial chromogenic substrate o-nitrophenyl-beta-D-galactopyranoside (ONPG). This Leuconostoc lactis protein is Beta-galactosidase large subunit.